A 284-amino-acid chain; its full sequence is Probable endonuclease 4 (284 aa).

Zn(2+)-binding residues include His69, His113, Glu148, Asp182, His185, His217, Asp230, His232, and Glu262.

It belongs to the AP endonuclease 2 family. Zn(2+) is required as a cofactor.

The catalysed reaction is Endonucleolytic cleavage to 5'-phosphooligonucleotide end-products.. Endonuclease IV plays a role in DNA repair. It cleaves phosphodiester bonds at apurinic or apyrimidinic (AP) sites, generating a 3'-hydroxyl group and a 5'-terminal sugar phosphate. The polypeptide is Probable endonuclease 4 (Bifidobacterium longum subsp. infantis (strain ATCC 15697 / DSM 20088 / JCM 1222 / NCTC 11817 / S12)).